The sequence spans 638 residues: DNA mismatch repair protein MutL (638 aa).

The tract at residues 398–435 (GREGTSFGTQTNAFGSMATPRDNSRGSYSAGESRQRTE) is disordered.

This sequence belongs to the DNA mismatch repair MutL/HexB family.

Its function is as follows. This protein is involved in the repair of mismatches in DNA. It is required for dam-dependent methyl-directed DNA mismatch repair. May act as a 'molecular matchmaker', a protein that promotes the formation of a stable complex between two or more DNA-binding proteins in an ATP-dependent manner without itself being part of a final effector complex. The polypeptide is DNA mismatch repair protein MutL (Shewanella baltica (strain OS155 / ATCC BAA-1091)).